The chain runs to 171 residues: Envelope protein UL128 (171 aa).

It belongs to the HHV-5 UL128 protein family. As to quaternary structure, forms the envelope pentamer complex (PC) composed of gH, gL, UL128, UL130, and UL131A. The pentamer interacts with host NRP2.

It localises to the virion membrane. Its function is as follows. Plays a role in viral entry into host cells. Forms a pentameric complex at the surface of the viral envelope together with gH, gL, UL130 and UL131. This complex is required for entry in epithelial, endothelial and myeloid host cells. Mechanistically, engages host receptor(s) including neurophilin 2/NRP2 to mediate infection. Additionally, monomeric UL128 may interfere with certain inflammatory cytokines to increase infection and dissemination by blocking monocytes migration. This Human cytomegalovirus (strain Merlin) (HHV-5) protein is Envelope protein UL128 (UL128).